Consider the following 287-residue polypeptide: MAGAKEIRSKIASVQNTQKITKAMEMVAASKMRKTQERMAASRPYAETMRSVIGHLALGNLEYKHPYLEEREVKRVGYLVVSTDRGLCGGLNINLFKKLLADMKEWSDKGVEVDLALVGSKAVSFFASVGGNVVGQVTGMGDDPQLSDLIGPVNIMLQAYDEGRLDKLYVVANKFINTMAQEPKILQVLPLPPGDDEELKEKSWDYLYEPDPKTLLDTLLRRYIESQVYQSVVENLASEQAARMVAMKAATDNGGNLIKELQLVYNKARQASITQELTEIVSGAAAV.

The protein belongs to the ATPase gamma chain family. F-type ATPases have 2 components, CF(1) - the catalytic core - and CF(0) - the membrane proton channel. CF(1) has five subunits: alpha(3), beta(3), gamma(1), delta(1), epsilon(1). CF(0) has three main subunits: a, b and c.

Its subcellular location is the cell inner membrane. Produces ATP from ADP in the presence of a proton gradient across the membrane. The gamma chain is believed to be important in regulating ATPase activity and the flow of protons through the CF(0) complex. The sequence is that of ATP synthase gamma chain from Proteus mirabilis (strain HI4320).